A 147-amino-acid chain; its full sequence is MNASATQATEIWPLVAYFFLVVMLVVGVMALSYIIGERHRSKATDEPFESGIVTVGLARFRLSAKFYLIAVFFVIFDVEAVFLFAWAVAFRELGWPGYIEAIIFISILGAALAYLWRLGALDWGPPRHSAGRFAKDSRSPNHAVVSK.

Transmembrane regions (helical) follow at residues 11-31, 68-88, and 93-113; these read IWPL…VMAL, LIAV…AWAV, and LGWP…AALA.

It belongs to the complex I subunit 3 family. As to quaternary structure, NDH-1 is composed of 14 different subunits. Subunits NuoA, H, J, K, L, M, N constitute the membrane sector of the complex.

It localises to the cell inner membrane. It catalyses the reaction a quinone + NADH + 5 H(+)(in) = a quinol + NAD(+) + 4 H(+)(out). In terms of biological role, NDH-1 shuttles electrons from NADH, via FMN and iron-sulfur (Fe-S) centers, to quinones in the respiratory chain. The immediate electron acceptor for the enzyme in this species is believed to be ubiquinone. Couples the redox reaction to proton translocation (for every two electrons transferred, four hydrogen ions are translocated across the cytoplasmic membrane), and thus conserves the redox energy in a proton gradient. The chain is NADH-quinone oxidoreductase subunit A from Nitrosospira multiformis (strain ATCC 25196 / NCIMB 11849 / C 71).